The following is a 104-amino-acid chain: MAAKIKRDDEVVVLAGKDKGKQGKVLKVLTDKDRVIVEGVNVVKKHQKPNPALGESGGIVEQEAAIHISNVAILNPETGKADRVGFRLEDGKKVRFFKSNNAII.

It belongs to the universal ribosomal protein uL24 family. In terms of assembly, part of the 50S ribosomal subunit.

Functionally, one of two assembly initiator proteins, it binds directly to the 5'-end of the 23S rRNA, where it nucleates assembly of the 50S subunit. One of the proteins that surrounds the polypeptide exit tunnel on the outside of the subunit. The protein is Large ribosomal subunit protein uL24 of Idiomarina loihiensis (strain ATCC BAA-735 / DSM 15497 / L2-TR).